Reading from the N-terminus, the 217-residue chain is Pyridoxine/pyridoxamine 5'-phosphate oxidase (217 aa).

Residues 13-16 and lysine 71 each bind substrate; that span reads RREY. FMN is bound by residues 66 to 71, 81 to 82, arginine 87, lysine 88, and glutamine 110; these read RIVLLK and YT. 3 residues coordinate substrate: tyrosine 128, arginine 132, and serine 136. Residues 145–146 and tryptophan 190 each bind FMN; that span reads QS. 196 to 198 contacts substrate; sequence RLH. Residue arginine 200 coordinates FMN.

The protein belongs to the pyridoxamine 5'-phosphate oxidase family. As to quaternary structure, homodimer. FMN serves as cofactor.

The enzyme catalyses pyridoxamine 5'-phosphate + O2 + H2O = pyridoxal 5'-phosphate + H2O2 + NH4(+). It carries out the reaction pyridoxine 5'-phosphate + O2 = pyridoxal 5'-phosphate + H2O2. It participates in cofactor metabolism; pyridoxal 5'-phosphate salvage; pyridoxal 5'-phosphate from pyridoxamine 5'-phosphate: step 1/1. The protein operates within cofactor metabolism; pyridoxal 5'-phosphate salvage; pyridoxal 5'-phosphate from pyridoxine 5'-phosphate: step 1/1. Its function is as follows. Catalyzes the oxidation of either pyridoxine 5'-phosphate (PNP) or pyridoxamine 5'-phosphate (PMP) into pyridoxal 5'-phosphate (PLP). The protein is Pyridoxine/pyridoxamine 5'-phosphate oxidase of Yersinia pestis bv. Antiqua (strain Antiqua).